We begin with the raw amino-acid sequence, 492 residues long: N-succinylglutamate 5-semialdehyde dehydrogenase (492 aa).

220-225 contributes to the NAD(+) binding site; the sequence is GSASTG. Catalysis depends on residues E243 and C277.

Belongs to the aldehyde dehydrogenase family. AstD subfamily.

The enzyme catalyses N-succinyl-L-glutamate 5-semialdehyde + NAD(+) + H2O = N-succinyl-L-glutamate + NADH + 2 H(+). It participates in amino-acid degradation; L-arginine degradation via AST pathway; L-glutamate and succinate from L-arginine: step 4/5. Functionally, catalyzes the NAD-dependent reduction of succinylglutamate semialdehyde into succinylglutamate. The protein is N-succinylglutamate 5-semialdehyde dehydrogenase of Salmonella heidelberg (strain SL476).